Reading from the N-terminus, the 199-residue chain is Probable V-type proton ATPase 20 kDa proteolipid subunit (199 aa).

Residues 1–3 are Vacuolar-facing; the sequence is MSL. The chain crosses the membrane as a helical span at residues 4–24; it reads FSTSLWTTTVMSIIVGLYMLF. Over 25 to 46 the chain is Cytoplasmic; the sequence is HNSGESFDFGSFLLDTSPYTWG. A helical transmembrane segment spans residues 47 to 67; sequence LLGIASCVAFGIIGAAWGIFI. Residues 68-86 lie on the Vacuolar side of the membrane; it reads CGTSILGGAVKAPRIKTKN. The chain crosses the membrane as a helical span at residues 87–107; that stretch reads LISIIFCEVVAIYSLIIAIVF. The Cytoplasmic portion of the chain corresponds to 108–130; that stretch reads SAKINDINPAGFYTKSHYYTGFA. Residues 131–151 traverse the membrane as a helical segment; it reads LFWGGITVGLCNLICGVCVGI. Residues 152 to 170 lie on the Vacuolar side of the membrane; that stretch reads TGSSAALADAQDASLFVKV. The chain crosses the membrane as a helical span at residues 171-191; that stretch reads LVVEIFGSVLGLFGLIVGLLI. The Cytoplasmic segment spans residues 192–199; the sequence is GGKASDFS.

Belongs to the V-ATPase proteolipid subunit family. As to quaternary structure, V-ATPase is a heteromultimeric enzyme composed of a peripheral catalytic V1 complex (components A to H) attached to an integral membrane V0 proton pore complex (components: a, c, c', c'', d, e, f and VOA1). The decameric c-ring forms the proton-conducting pore, and is composed of eight proteolipid subunits c, one subunit c' and one subunit c''.

Its subcellular location is the vacuole membrane. Proton-conducting pore forming subunit of the V0 complex of vacuolar(H+)-ATPase (V-ATPase), a multisubunit enzyme composed of a peripheral complex (V1) that hydrolyzes ATP and a membrane integral complex (V0) that translocates protons. V-ATPase is responsible for acidifying and maintaining the pH of intracellular compartments. The protein is Probable V-type proton ATPase 20 kDa proteolipid subunit (vma16) of Schizosaccharomyces pombe (strain 972 / ATCC 24843) (Fission yeast).